The chain runs to 341 residues: GTP 3',8-cyclase (341 aa).

The Radical SAM core domain occupies 11 to 231 (KRNRPLRDLR…DLINKHMPVE (221 aa)). Arg20 is a binding site for GTP. Residues Cys27 and Cys31 each contribute to the [4Fe-4S] cluster site. Tyr33 is a binding site for S-adenosyl-L-methionine. Cys34 serves as a coordination point for [4Fe-4S] cluster. Arg75 provides a ligand contact to GTP. Residue Gly79 participates in S-adenosyl-L-methionine binding. Thr106 serves as a coordination point for GTP. Residue Ser130 coordinates S-adenosyl-L-methionine. Lys167 lines the GTP pocket. Met201 contributes to the S-adenosyl-L-methionine binding site. The [4Fe-4S] cluster site is built by Cys265 and Cys268. 270–272 (RAR) serves as a coordination point for GTP. Residue Cys282 coordinates [4Fe-4S] cluster.

It belongs to the radical SAM superfamily. MoaA family. Monomer and homodimer. It depends on [4Fe-4S] cluster as a cofactor.

The catalysed reaction is GTP + AH2 + S-adenosyl-L-methionine = (8S)-3',8-cyclo-7,8-dihydroguanosine 5'-triphosphate + 5'-deoxyadenosine + L-methionine + A + H(+). Its pathway is cofactor biosynthesis; molybdopterin biosynthesis. Its function is as follows. Catalyzes the cyclization of GTP to (8S)-3',8-cyclo-7,8-dihydroguanosine 5'-triphosphate. Required for both nitrate assimilation and respiration. The chain is GTP 3',8-cyclase from Bacillus subtilis (strain 168).